The following is a 229-amino-acid chain: Uracil-DNA glycosylase (229 aa).

D64 (proton acceptor) is an active-site residue.

The protein belongs to the uracil-DNA glycosylase (UDG) superfamily. UNG family.

The protein resides in the cytoplasm. The enzyme catalyses Hydrolyzes single-stranded DNA or mismatched double-stranded DNA and polynucleotides, releasing free uracil.. Functionally, excises uracil residues from the DNA which can arise as a result of misincorporation of dUMP residues by DNA polymerase or due to deamination of cytosine. In Salmonella choleraesuis (strain SC-B67), this protein is Uracil-DNA glycosylase.